Consider the following 321-residue polypeptide: Ubiquinone biosynthesis O-methyltransferase, mitochondrial (321 aa).

The S-adenosyl-L-methionine site is built by arginine 102, glycine 135, aspartate 157, and leucine 210. The Mg(2+) site is built by glutamate 211, glutamate 214, and histidine 215.

It belongs to the class I-like SAM-binding methyltransferase superfamily. UbiG/COQ3 family. Component of a multi-subunit COQ enzyme complex. Mg(2+) serves as cofactor.

Its subcellular location is the mitochondrion inner membrane. It carries out the reaction a 3,4-dihydroxy-5-(all-trans-polyprenyl)benzoate + S-adenosyl-L-methionine = a 4-hydroxy-3-methoxy-5-(all-trans-polyprenyl)benzoate + S-adenosyl-L-homocysteine + H(+). It catalyses the reaction a 3-demethylubiquinone + S-adenosyl-L-methionine = a ubiquinone + S-adenosyl-L-homocysteine. The enzyme catalyses a 3-demethylubiquinol + S-adenosyl-L-methionine = a ubiquinol + S-adenosyl-L-homocysteine + H(+). The protein operates within cofactor biosynthesis; ubiquinone biosynthesis. In terms of biological role, O-methyltransferase required for two non-consecutive steps during ubiquinone biosynthesis. Catalyzes the 2 O-methylation of 3,4-dihydroxy-5-(all-trans-polyprenyl)benzoic acid into 4-hydroxy-3-methoxy-5-(all-trans-polyprenyl)benzoic acid. Also catalyzes the last step of ubiquinone biosynthesis by mediating methylation of 3-demethylubiquinone into ubiquinone. Also able to mediate the methylation of 3-demethylubiquinol into ubiquinol. The chain is Ubiquinone biosynthesis O-methyltransferase, mitochondrial from Dictyostelium discoideum (Social amoeba).